The sequence spans 175 residues: ATP-dependent protease subunit HslV (175 aa).

The active site involves threonine 2. Na(+)-binding residues include glycine 158, cysteine 161, and threonine 164.

It belongs to the peptidase T1B family. HslV subfamily. As to quaternary structure, a double ring-shaped homohexamer of HslV is capped on each side by a ring-shaped HslU homohexamer. The assembly of the HslU/HslV complex is dependent on binding of ATP.

The protein resides in the cytoplasm. It carries out the reaction ATP-dependent cleavage of peptide bonds with broad specificity.. Its activity is regulated as follows. Allosterically activated by HslU binding. Functionally, protease subunit of a proteasome-like degradation complex believed to be a general protein degrading machinery. The chain is ATP-dependent protease subunit HslV from Histophilus somni (strain 129Pt) (Haemophilus somnus).